The chain runs to 2567 residues: Unconventional myosin-XVIIIb (2567 aa).

A disordered region spans residues 41–508 (LVRGTEKEAK…SRDSDQAPED (468 aa)). The span at 44-54 (GTEKEAKEARQ) shows a compositional bias: basic and acidic residues. Low complexity predominate over residues 71 to 104 (SISQPNSKSSSGTRSGSQQISQDDQSSSPGSSDI). Basic and acidic residues-rich tracts occupy residues 105–116 (LGKESEGSRSPD) and 160–176 (LDPD…HDAP). The span at 196 to 206 (SRTPCGSQAST) shows a compositional bias: polar residues. 3 stretches are compositionally biased toward basic and acidic residues: residues 251 to 265 (TELK…DRQG), 278 to 287 (RPGKAEKEGA), and 326 to 349 (SKWD…EKTG). Positions 350 to 362 (EPQTQMEKTSQVQ) are enriched in polar residues. Composition is skewed to basic and acidic residues over residues 367 to 377 (DDLRMGEKAGE), 410 to 420 (SQTEKGCEAPK), 471 to 485 (LEKD…KENQ), and 492 to 508 (EEGK…APED). The region spanning 571–1333 (DQVEDLASLI…VISRLEKQRE (763 aa)) is the Myosin motor domain. 660 to 667 (GWSGAGKT) lines the ATP pocket. The segment at 1208–1232 (VESRSGQESPPPPQPGRDKPGAGGP) is disordered. Positions 1213 to 1240 (GQESPPPPQPGRDKPGAGGPLALDIPAL) are GPA. Position 1216 is a phosphoserine (S1216). An IQ domain is found at 1336–1365 (VSQSIVLFQAACKGFLSRQEFKKLKIRRLA). Coiled-coil stretches lie at residues 1396–1783 (SATI…GLIG), 1825–1961 (KTSV…STVD), and 2014–2090 (ESQQ…VASS). Residues 1426–2083 (NELRQNTDLL…IRRIADLQAA (658 aa)) are tail. S1829 carries the phosphoserine modification. Residues 2139–2153 (TMRTPSRQSATSSRI) are compositionally biased toward polar residues. 2 disordered regions span residues 2139–2194 (TMRT…PVSP) and 2217–2249 (STER…PSAA). The segment covering 2158 to 2167 (INEEAGDTER) has biased composition (basic and acidic residues). The span at 2168-2185 (TQSALALSRARSTNVHSK) shows a compositional bias: polar residues. Residue S2193 is modified to Phosphoserine. Residues 2227–2238 (PLASRSTNTSPL) show a composition bias toward polar residues. Phosphoserine is present on residues S2296 and S2309. Residues 2357-2376 (SRPSMGRKLSSPTTPRDMLL) are disordered. S2377 bears the Phosphoserine mark. 2 disordered regions span residues 2444–2471 (FLPA…SQRS) and 2494–2567 (KSPE…YLQK). Residues 2494–2504 (KSPEPKEDPAH) are compositionally biased toward basic and acidic residues. The span at 2506–2520 (SDSSSSSGSIVSFKS) shows a compositional bias: low complexity. Residues 2537–2556 (GGERTSPERREPGTGRKDDD) are compositionally biased toward basic and acidic residues.

It belongs to the TRAFAC class myosin-kinesin ATPase superfamily. Myosin family. As to quaternary structure, homodimer. May interact with F actin through the GPA motif (Gly/Pro/Ala-rich). Selectively expressed in cardiac and skeletal muscles. Weakly expressed in testis, pancreas, placenta, prostate, lung and thymus.

It is found in the cytoplasm. Its subcellular location is the nucleus. The protein resides in the myofibril. It localises to the sarcomere. Its function is as follows. May be involved in intracellular trafficking of the muscle cell when in the cytoplasm, whereas entering the nucleus, may be involved in the regulation of muscle specific genes. May play a role in the control of tumor development and progression; restored MYO18B expression in lung cancer cells suppresses anchorage-independent growth. This Homo sapiens (Human) protein is Unconventional myosin-XVIIIb (MYO18B).